Consider the following 121-residue polypeptide: Putative iron-sulfur cluster insertion protein ErpA (121 aa).

Iron-sulfur cluster-binding residues include Cys49, Cys113, and Cys115.

This sequence belongs to the HesB/IscA family. Homodimer. The cofactor is iron-sulfur cluster.

Functionally, required for insertion of 4Fe-4S clusters. The polypeptide is Putative iron-sulfur cluster insertion protein ErpA (Polaromonas sp. (strain JS666 / ATCC BAA-500)).